Reading from the N-terminus, the 297-residue chain is 33 kDa chaperonin (297 aa).

Cystine bridges form between cysteine 234–cysteine 236 and cysteine 267–cysteine 270.

It belongs to the HSP33 family. Under oxidizing conditions two disulfide bonds are formed involving the reactive cysteines. Under reducing conditions zinc is bound to the reactive cysteines and the protein is inactive.

Its subcellular location is the cytoplasm. Redox regulated molecular chaperone. Protects both thermally unfolding and oxidatively damaged proteins from irreversible aggregation. Plays an important role in the bacterial defense system toward oxidative stress. The polypeptide is 33 kDa chaperonin (Pseudoalteromonas atlantica (strain T6c / ATCC BAA-1087)).